Consider the following 656-residue polypeptide: Macrolide export ATP-binding/permease protein MacB (656 aa).

An ABC transporter domain is found at 6–244 (LEVSACYRSF…AAPKTEVIPA (239 aa)). 42–49 (GASGSGKS) contacts ATP. Transmembrane regions (helical) follow at residues 277-297 (FLTM…VALG), 531-551 (LLIS…VMNI), 586-606 (LVCL…GVVF), and 621-641 (SIVA…FLPA).

This sequence belongs to the ABC transporter superfamily. Macrolide exporter (TC 3.A.1.122) family. As to quaternary structure, homodimer. Part of the tripartite efflux system MacAB-TolC, which is composed of an inner membrane transporter, MacB, a periplasmic membrane fusion protein, MacA, and an outer membrane component, TolC. The complex forms a large protein conduit and can translocate molecules across both the inner and outer membranes. Interacts with MacA.

The protein localises to the cell inner membrane. Part of the tripartite efflux system MacAB-TolC. MacB is a non-canonical ABC transporter that contains transmembrane domains (TMD), which form a pore in the inner membrane, and an ATP-binding domain (NBD), which is responsible for energy generation. Confers resistance against macrolides. The polypeptide is Macrolide export ATP-binding/permease protein MacB (Shewanella sp. (strain ANA-3)).